A 553-amino-acid polypeptide reads, in one-letter code: 5'-nucleotidase (553 aa).

Positions Met1–Gly21 are cleaved as a signal peptide. Residue Cys22 is the site of N-palmitoyl cysteine attachment. Cys22 is lipidated: S-diacylglycerol cysteine. Asp45, His47, Asp88, Asn120, His221, His256, and Gln258 together coordinate a divalent metal cation. Residues Phe432 and Phe501 to Asp507 each bind substrate.

Belongs to the 5'-nucleotidase family. Chloride is required as a cofactor. It depends on Mg(2+) as a cofactor.

The protein localises to the cell outer membrane. The enzyme catalyses a ribonucleoside 5'-phosphate + H2O = a ribonucleoside + phosphate. In terms of biological role, degradation of extracellular 5'-nucleotides for nutritional needs. The chain is 5'-nucleotidase (nutA) from Vibrio cholerae serotype O1 (strain ATCC 39315 / El Tor Inaba N16961).